Reading from the N-terminus, the 324-residue chain is Kelch domain-containing protein PF0436 (324 aa).

Kelch repeat units lie at residues 112–160 (EVLL…LWDG), 254–301 (GIYI…WDGR), and 303–323 (IYIVGGRGPGPNKYIVIFTPK).

The chain is Kelch domain-containing protein PF0436 from Pyrococcus furiosus (strain ATCC 43587 / DSM 3638 / JCM 8422 / Vc1).